The following is a 162-amino-acid chain: NADPH-dependent 7-cyano-7-deazaguanine reductase (162 aa).

The Thioimide intermediate role is filled by C53. The active-site Proton donor is D60. Residues 75 to 77 (VES) and 94 to 95 (HE) each bind substrate.

This sequence belongs to the GTP cyclohydrolase I family. QueF type 1 subfamily.

Its subcellular location is the cytoplasm. It catalyses the reaction 7-aminomethyl-7-carbaguanine + 2 NADP(+) = 7-cyano-7-deazaguanine + 2 NADPH + 3 H(+). Its pathway is tRNA modification; tRNA-queuosine biosynthesis. Catalyzes the NADPH-dependent reduction of 7-cyano-7-deazaguanine (preQ0) to 7-aminomethyl-7-deazaguanine (preQ1). This is NADPH-dependent 7-cyano-7-deazaguanine reductase from Streptococcus mutans serotype c (strain ATCC 700610 / UA159).